The sequence spans 267 residues: 4-hydroxy-tetrahydrodipicolinate reductase (267 aa).

NAD(+) contacts are provided by residues 8–13 (GAAGRM) and Asp34. Arg35 serves as a coordination point for NADP(+). Residues 98–100 (GTT) and 122–125 (AANF) contribute to the NAD(+) site. The active-site Proton donor/acceptor is His155. His156 is a (S)-2,3,4,5-tetrahydrodipicolinate binding site. The active-site Proton donor is Lys159. 165–166 (GT) lines the (S)-2,3,4,5-tetrahydrodipicolinate pocket.

Belongs to the DapB family.

Its subcellular location is the cytoplasm. It catalyses the reaction (S)-2,3,4,5-tetrahydrodipicolinate + NAD(+) + H2O = (2S,4S)-4-hydroxy-2,3,4,5-tetrahydrodipicolinate + NADH + H(+). The enzyme catalyses (S)-2,3,4,5-tetrahydrodipicolinate + NADP(+) + H2O = (2S,4S)-4-hydroxy-2,3,4,5-tetrahydrodipicolinate + NADPH + H(+). It participates in amino-acid biosynthesis; L-lysine biosynthesis via DAP pathway; (S)-tetrahydrodipicolinate from L-aspartate: step 4/4. Its function is as follows. Catalyzes the conversion of 4-hydroxy-tetrahydrodipicolinate (HTPA) to tetrahydrodipicolinate. This Ectopseudomonas mendocina (strain ymp) (Pseudomonas mendocina) protein is 4-hydroxy-tetrahydrodipicolinate reductase.